The chain runs to 495 residues: Probable cytosol aminopeptidase (495 aa).

Mn(2+) contacts are provided by Lys258 and Asp263. Lys270 is a catalytic residue. Mn(2+) contacts are provided by Asp281, Asp340, and Glu342. The active site involves Arg344.

The protein belongs to the peptidase M17 family. Mn(2+) is required as a cofactor.

It localises to the cytoplasm. The enzyme catalyses Release of an N-terminal amino acid, Xaa-|-Yaa-, in which Xaa is preferably Leu, but may be other amino acids including Pro although not Arg or Lys, and Yaa may be Pro. Amino acid amides and methyl esters are also readily hydrolyzed, but rates on arylamides are exceedingly low.. It carries out the reaction Release of an N-terminal amino acid, preferentially leucine, but not glutamic or aspartic acids.. Presumably involved in the processing and regular turnover of intracellular proteins. Catalyzes the removal of unsubstituted N-terminal amino acids from various peptides. The polypeptide is Probable cytosol aminopeptidase (Leptospira interrogans serogroup Icterohaemorrhagiae serovar copenhageni (strain Fiocruz L1-130)).